Consider the following 907-residue polypeptide: Protein translocase subunit SecA (907 aa).

Residues glutamine 87, glycine 105–threonine 109, and aspartate 512 each bind ATP. The interval glutamine 834–isoleucine 907 is disordered. Basic and acidic residues-rich tracts occupy residues aspartate 836 to arginine 853 and glutamate 873 to arginine 888. Positions 892, 894, 903, and 904 each coordinate Zn(2+). Positions lysine 898–isoleucine 907 are enriched in basic residues.

Belongs to the SecA family. In terms of assembly, monomer and homodimer. Part of the essential Sec protein translocation apparatus which comprises SecA, SecYEG and auxiliary proteins SecDF-YajC and YidC. Zn(2+) serves as cofactor.

The protein localises to the cell inner membrane. It localises to the cytoplasm. The catalysed reaction is ATP + H2O + cellular proteinSide 1 = ADP + phosphate + cellular proteinSide 2.. Its function is as follows. Part of the Sec protein translocase complex. Interacts with the SecYEG preprotein conducting channel. Has a central role in coupling the hydrolysis of ATP to the transfer of proteins into and across the cell membrane, serving both as a receptor for the preprotein-SecB complex and as an ATP-driven molecular motor driving the stepwise translocation of polypeptide chains across the membrane. The protein is Protein translocase subunit SecA of Aliivibrio fischeri (strain ATCC 700601 / ES114) (Vibrio fischeri).